The sequence spans 431 residues: UDP-N-acetylmuramate--L-alanine ligase (431 aa).

Residue 108-114 coordinates ATP; that stretch reads GAHGKST.

The protein belongs to the MurCDEF family.

It localises to the cytoplasm. The catalysed reaction is UDP-N-acetyl-alpha-D-muramate + L-alanine + ATP = UDP-N-acetyl-alpha-D-muramoyl-L-alanine + ADP + phosphate + H(+). It functions in the pathway cell wall biogenesis; peptidoglycan biosynthesis. In terms of biological role, cell wall formation. In Campylobacter jejuni subsp. doylei (strain ATCC BAA-1458 / RM4099 / 269.97), this protein is UDP-N-acetylmuramate--L-alanine ligase.